We begin with the raw amino-acid sequence, 211 residues long: Protein FAM167A (211 aa).

Disordered regions lie at residues M1–R30 and E56–E108. Residues L120 to T153 adopt a coiled-coil conformation.

This sequence belongs to the FAM167 (SEC) family.

The polypeptide is Protein FAM167A (FAM167A) (Bos taurus (Bovine)).